The following is a 1229-amino-acid chain: ABC transporter B family member 22 (1229 aa).

6 helical membrane passes run 22 to 42 (MGLG…IFFI), 69 to 89 (VALL…GYCW), 145 to 167 (LPNF…IMLW), 171 to 193 (IVGF…ALIN), 251 to 271 (GIAI…TWYG), and 274 to 294 (MVMY…CITY). Positions 22–311 (MGLGLIGAVG…GLSNLKYFSE (290 aa)) constitute an ABC transmembrane type-1 1 domain. The 237-residue stretch at 346–582 (VQFKHVKFMY…VDGQYTSLVR (237 aa)) folds into the ABC transporter 1 domain. 381–388 (GGSGSGKS) serves as a coordination point for ATP. N-linked (GlcNAc...) asparagine glycans are attached at residues Asn529 and Asn594. The next 2 membrane-spanning stretches (helical) occupy residues 661–681 (ALYG…YAYA) and 703–723 (IYVL…IIQQ). The region spanning 661 to 949 (ALYGCLSAVL…AGAMTMDLAK (289 aa)) is the ABC transmembrane type-1 2 domain. N-linked (GlcNAc...) asparagine glycosylation occurs at Asn758. The next 4 membrane-spanning stretches (helical) occupy residues 782–800 (VSLL…TLGL), 807–823 (SIVM…CFYT), 885–908 (WLAG…NYWY), and 923–943 (FFEL…AGAM). Positions 984 to 1222 (IKFVNVDFAY…GPTGVYFSLV (239 aa)) constitute an ABC transporter 2 domain. An N-linked (GlcNAc...) asparagine glycan is attached at Asn1004. 1019–1026 (GPSGSGKS) contacts ATP. An N-linked (GlcNAc...) asparagine glycan is attached at Asn1157.

This sequence belongs to the ABC transporter superfamily. ABCB family. Multidrug resistance exporter (TC 3.A.1.201) subfamily.

It is found in the membrane. The chain is ABC transporter B family member 22 (ABCB22) from Arabidopsis thaliana (Mouse-ear cress).